Here is a 490-residue protein sequence, read N- to C-terminus: Katanin p60 ATPase-containing subunit A-like 1 (490 aa).

Methionine 1 carries the N-acetylmethionine modification. The tract at residues proline 96–aspartate 182 is disordered. The span at proline 116 to methionine 127 shows a compositional bias: basic and acidic residues. The span at alanine 128–alanine 139 shows a compositional bias: low complexity. The span at serine 143–methionine 169 shows a compositional bias: basic and acidic residues. Serine 174 carries the post-translational modification Phosphoserine. An ATP-binding site is contributed by glycine 248–threonine 255.

It belongs to the AAA ATPase family. Katanin p60 subunit A1 subfamily. A-like 1 sub-subfamily. Interacts with KATNB1 and KATNBL1.

Its subcellular location is the cytoplasm. It localises to the cytoskeleton. The protein resides in the spindle pole. It is found in the spindle. It catalyses the reaction n ATP + n H2O + a microtubule = n ADP + n phosphate + (n+1) alpha/beta tubulin heterodimers.. Functionally, regulates microtubule dynamics in Sertoli cells, a process that is essential for spermiogenesis and male fertility. Severs microtubules in an ATP-dependent manner, promoting rapid reorganization of cellular microtubule arrays. Has microtubule-severing activity in vitro. This chain is Katanin p60 ATPase-containing subunit A-like 1, found in Oryctolagus cuniculus (Rabbit).